We begin with the raw amino-acid sequence, 484 residues long: Probable autolysin PH (484 aa).

Positions Lys-5–Arg-148 constitute a Peptidase C51 domain. The MurNAc-LAA domain maps to Ile-181–His-363. The 71-residue stretch at Lys-402–Gly-472 folds into the SH3b domain.

It catalyses the reaction Hydrolyzes the link between N-acetylmuramoyl residues and L-amino acid residues in certain cell-wall glycopeptides.. Functionally, has weak lytic activity toward S.aureus cells. Full-length protein has no activity, but fusion of the Peptidase C51 domain to the lysostaphin SH3 cell wall binding domain yields an active chimeric enzyme, suggesting that PH may be functional. The chain is Probable autolysin PH from Staphylococcus aureus (strain NCTC 8325 / PS 47).